A 539-amino-acid chain; its full sequence is Alpha-aminoadipic semialdehyde dehydrogenase (539 aa).

Residues 1-26 constitute a mitochondrion transit peptide; the sequence is MLRLARPLCVQTVKASKLSRLWSRPA. Residues lysine 86, lysine 94, and lysine 97 each carry the N6-acetyllysine; alternate modification. Residues lysine 86, lysine 94, and lysine 97 each carry the N6-succinyllysine; alternate modification. NAD(+)-binding positions include 192 to 194, lysine 218, 258 to 259, 274 to 275, 274 to 279, and 296 to 297; these read TAF, GT, GS, GSTQVG, and EL. The Proton acceptor role is filled by glutamate 296. Residue cysteine 330 is the Nucleophile of the active site. Threonine 331 provides a ligand contact to (S)-2-amino-6-oxohexanoate. Glutamate 427 contacts NAD(+). Residue lysine 462 is modified to N6-acetyllysine. (S)-2-amino-6-oxohexanoate-binding residues include glycine 489 and alanine 490. Lysine 500 bears the N6-acetyllysine mark. An N6-succinyllysine modification is found at lysine 537.

Belongs to the aldehyde dehydrogenase family. Homotetramer. Abundant in kidney, liver, cochlea and outer hair cells but not inner hair cells or vestibular type I hair cells. Very low levels in lung, brain, intestine and pancreas.

The protein localises to the cytoplasm. It is found in the cytosol. The protein resides in the nucleus. It localises to the mitochondrion. The enzyme catalyses nonanal + NAD(+) + H2O = nonanoate + NADH + 2 H(+). It carries out the reaction (S)-2-amino-6-oxohexanoate + NAD(+) + H2O = L-2-aminoadipate + NADH + 2 H(+). The catalysed reaction is betaine aldehyde + NAD(+) + H2O = glycine betaine + NADH + 2 H(+). It catalyses the reaction an aldehyde + NAD(+) + H2O = a carboxylate + NADH + 2 H(+). The enzyme catalyses hexanal + NAD(+) + H2O = hexanoate + NADH + 2 H(+). It carries out the reaction octanal + NAD(+) + H2O = octanoate + NADH + 2 H(+). The catalysed reaction is (E)-non-2-enal + NAD(+) + H2O = (E)-non-2-enoate + NADH + 2 H(+). It catalyses the reaction (E)-4-hydroxynon-2-enal + NAD(+) + H2O = (E)-4-hydroxynon-2-enoate + NADH + 2 H(+). The protein operates within amine and polyamine biosynthesis; betaine biosynthesis via choline pathway; betaine from betaine aldehyde: step 1/1. Its function is as follows. Multifunctional enzyme mediating important protective effects. Metabolizes betaine aldehyde to betaine, an important cellular osmolyte and methyl donor. Protects cells from oxidative stress by metabolizing a number of lipid peroxidation-derived aldehydes. Involved in lysine catabolism. This Rattus norvegicus (Rat) protein is Alpha-aminoadipic semialdehyde dehydrogenase.